A 326-amino-acid polypeptide reads, in one-letter code: UDP-N-acetylglucosamine transporter (326 aa).

A run of 8 helical transmembrane segments spans residues 8 to 24 (LSLG…VLTM), 42 to 58 (AVVV…ILLV), 138 to 154 (VYQW…VAFV), 174 to 190 (FVGL…SGFA), 210 to 226 (IQLG…GVYI), 247 to 263 (IVVI…AAVI), 269 to 285 (ILKG…STLI), and 296 to 312 (TSVF…ATFL).

This sequence belongs to the nucleotide-sugar transporter family. SLC35A subfamily. As to quaternary structure, interacts with SLC35A2; the interaction is reduced in the presence of SLC35A4. Found in a complex with SLC35A2 and SLC35A4.

The protein resides in the golgi apparatus membrane. Uridine diphosphate-N-acetylglucosamine (UDP-GlcNAc) transporter in the Golgi apparatus. May supply UDP-GlcNAc as substrate for Golgi-resident glycosyltransferases that generate branching of diantennary oligosaccharides. This is UDP-N-acetylglucosamine transporter (SLC35A3) from Canis lupus familiaris (Dog).